We begin with the raw amino-acid sequence, 127 residues long: Glycine cleavage system H protein (127 aa).

The Lipoyl-binding domain occupies 24–106 (VVTVGVTFHA…YGAGWFFKLK (83 aa)). Lys65 carries the N6-lipoyllysine modification.

The protein belongs to the GcvH family. The glycine cleavage system is composed of four proteins: P, T, L and H. It depends on (R)-lipoate as a cofactor.

The glycine cleavage system catalyzes the degradation of glycine. The H protein shuttles the methylamine group of glycine from the P protein to the T protein. In Laribacter hongkongensis (strain HLHK9), this protein is Glycine cleavage system H protein.